The primary structure comprises 151 residues: Ribosome maturation factor RimP (151 aa).

This sequence belongs to the RimP family.

The protein resides in the cytoplasm. Required for maturation of 30S ribosomal subunits. This chain is Ribosome maturation factor RimP, found in Saccharophagus degradans (strain 2-40 / ATCC 43961 / DSM 17024).